Consider the following 399-residue polypeptide: DNA replication and repair protein RecF (399 aa).

30–37 (GSNGIGKT) is an ATP binding site.

It belongs to the RecF family.

Its subcellular location is the cytoplasm. Its function is as follows. The RecF protein is involved in DNA metabolism; it is required for DNA replication and normal SOS inducibility. RecF binds preferentially to single-stranded, linear DNA. It also seems to bind ATP. This Paenarthrobacter aurescens (strain TC1) protein is DNA replication and repair protein RecF.